The primary structure comprises 324 residues: Beta-ketoacyl-[acyl-carrier-protein] synthase III (324 aa).

Catalysis depends on residues Cys-114 and His-251. Residues Gln-252 to Arg-256 form an ACP-binding region. Asn-281 is an active-site residue.

This sequence belongs to the thiolase-like superfamily. FabH family. In terms of assembly, homodimer.

It localises to the cytoplasm. The catalysed reaction is malonyl-[ACP] + acetyl-CoA + H(+) = 3-oxobutanoyl-[ACP] + CO2 + CoA. It functions in the pathway lipid metabolism; fatty acid biosynthesis. Catalyzes the condensation reaction of fatty acid synthesis by the addition to an acyl acceptor of two carbons from malonyl-ACP. Catalyzes the first condensation reaction which initiates fatty acid synthesis and may therefore play a role in governing the total rate of fatty acid production. Possesses both acetoacetyl-ACP synthase and acetyl transacylase activities. Its substrate specificity determines the biosynthesis of branched-chain and/or straight-chain of fatty acids. This is Beta-ketoacyl-[acyl-carrier-protein] synthase III from Paramagnetospirillum magneticum (strain ATCC 700264 / AMB-1) (Magnetospirillum magneticum).